A 562-amino-acid chain; its full sequence is Endoglucanase E1 (562 aa).

The signal sequence occupies residues 1–41 (MPRALRRVPGSRVMLRVGVVVAVLALVAALANLAVPRPARA). The segment at 42 to 400 (AGGGYWHTSG…IKSSIFDPVG (359 aa)) is catalytic. Residues cysteine 75 and cysteine 161 are joined by a disulfide bond. The active-site Proton donor is glutamate 203. A disulfide bridge connects residues cysteine 209 and cysteine 212. The active-site Nucleophile is the glutamate 323. The tract at residues 399-462 (VGASASPSSQ…PTPSPTAASG (64 aa)) is disordered. Low complexity-rich tracts occupy residues 401-411 (ASASPSSQPSP) and 437-449 (PTPT…TPTP). The CBM2 domain maps to 458–562 (TAASGARCTA…AAPTVACAAS (105 aa)).

The protein belongs to the glycosyl hydrolase 5 (cellulase A) family.

The catalysed reaction is Endohydrolysis of (1-&gt;4)-beta-D-glucosidic linkages in cellulose, lichenin and cereal beta-D-glucans.. Its function is as follows. Has a very high specific activity on carboxymethylcellulose. The chain is Endoglucanase E1 from Acidothermus cellulolyticus (strain ATCC 43068 / DSM 8971 / 11B).